The sequence spans 89 residues: Small ribosomal subunit protein uS15 (89 aa).

It belongs to the universal ribosomal protein uS15 family. Part of the 30S ribosomal subunit. Forms a bridge to the 50S subunit in the 70S ribosome, contacting the 23S rRNA.

Functionally, one of the primary rRNA binding proteins, it binds directly to 16S rRNA where it helps nucleate assembly of the platform of the 30S subunit by binding and bridging several RNA helices of the 16S rRNA. Forms an intersubunit bridge (bridge B4) with the 23S rRNA of the 50S subunit in the ribosome. The protein is Small ribosomal subunit protein uS15 of Bacteroides thetaiotaomicron (strain ATCC 29148 / DSM 2079 / JCM 5827 / CCUG 10774 / NCTC 10582 / VPI-5482 / E50).